We begin with the raw amino-acid sequence, 403 residues long: Microtubule-associated protein tau (403 aa).

Positions 1–32 (MAEPRQEFDVMEDHAQGDYTLQDHEGDMEPGL) are enriched in basic and acidic residues. The segment at 1–219 (MAEPRQEFDV…GPMPDLKNVK (219 aa)) is disordered. A2 is subject to N-acetylalanine. Y19 is modified (phosphotyrosine). K33 participates in a covalent cross-link: Glycyl lysine isopeptide (Lys-Gly) (interchain with G-Cter in ubiquitin). Residues S35 and S50 each carry the phosphoserine modification. Residues 50–60 (SETSDAKSTPT) show a composition bias toward polar residues. Phosphothreonine is present on residues T58, T60, and T71. The segment covering 90–106 (KGKDGTGPDDKKAKGAD) has biased composition (basic and acidic residues). T115 carries the post-translational modification Phosphothreonine. R117 carries the post-translational modification Omega-N-methylarginine. K125 bears the N6,N6-dimethyllysine; alternate mark. At K125 the chain carries N6-acetyllysine; alternate. A phosphothreonine mark is found at T131, T137, T138, and T143. Residues 136–147 (KTTPTPKTSPGT) show a composition bias toward low complexity. 2 positions are modified to phosphoserine: S153 and S157. Over residues 156–176 (RSGYSSPGSPGTPGSRSRTPS) the composition is skewed to low complexity. Residue Y159 is modified to Phosphotyrosine. Residues S160, S161, and S164 each carry the phosphoserine modification. Residues T167 and T174 each carry the phosphothreonine modification. The residue at position 176 (S176) is a Phosphoserine. Phosphothreonine is present on T179. An N6-acetyllysine modification is found at K187. T193 is subject to Phosphothreonine. 2 positions are modified to phosphoserine: S197 and S199. 4 Tau/MAP repeats span residues 206–236 (QAAP…GGGK), 237–267 (VQII…GGGS), 268–298 (VQIV…GGGQ), and 299–330 (VEVK…GGGN). A Glycyl lysine isopeptide (Lys-Gly) (interchain with G-Cter in ubiquitin) cross-link involves residue K216. The residue at position 221 (K221) is an N6-acetyllysine; alternate. An N6-methyllysine; alternate modification is found at K221. K221 participates in a covalent cross-link: Glycyl lysine isopeptide (Lys-Gly) (interchain with G-Cter in ubiquitin); alternate. A Phosphoserine modification is found at S224. Residue K229 forms a Glycyl lysine isopeptide (Lys-Gly) (interchain with G-Cter in ubiquitin) linkage. K243 bears the N6-acetyllysine; alternate mark. K243 participates in a covalent cross-link: Glycyl lysine isopeptide (Lys-Gly) (interchain with G-Cter in ubiquitin); alternate. Phosphoserine is present on residues S247 and S251. Residue K252 is modified to N6-acetyllysine. Residues C253 and C284 are joined by a disulfide bond. Position 255 is a phosphoserine (S255). K260 is subject to N6-acetyllysine; alternate. Residue K260 forms a Glycyl lysine isopeptide (Lys-Gly) (interchain with G-Cter in ubiquitin); alternate linkage. S267 is modified (phosphoserine). K273 is modified (N6,N6-dimethyllysine; alternate). N6-acetyllysine; alternate is present on residues K273, K279, and K283. Glycyl lysine isopeptide (Lys-Gly) (interchain with G-Cter in ubiquitin); alternate cross-links involve residues K273, K279, and K283. S286 is modified (phosphoserine). N6-acetyllysine; alternate is present on residues K293, K305, and K309. Residues K293, K305, and K309 each participate in a glycyl lysine isopeptide (Lys-Gly) (interchain with G-Cter in ubiquitin); alternate cross-link. R311 is modified (omega-N-methylarginine). A Phosphoserine modification is found at S314. Residue K315 forms a Glycyl lysine isopeptide (Lys-Gly) (interchain with G-Cter in ubiquitin) linkage. S318 is subject to Phosphoserine. An N6-acetyllysine; alternate modification is found at K331. Residue K331 forms a Glycyl lysine isopeptide (Lys-Gly) (interchain with G-Cter in ubiquitin); alternate linkage. K337 is covalently cross-linked (Glycyl lysine isopeptide (Lys-Gly) (interchain with G-Cter in ubiquitin)). The residue at position 347 (K347) is an N6-acetyllysine; alternate. Residue K347 forms a Glycyl lysine isopeptide (Lys-Gly) (interchain with G-Cter in ubiquitin); alternate linkage. Position 356 is a phosphotyrosine (Y356). A phosphoserine mark is found at S358 and S362. The disordered stretch occupies residues 360–379 (VVSGDTSPRHLSNVSSTGSI). Residues 363–378 (GDTSPRHLSNVSSTGS) are compositionally biased toward polar residues. At T365 the chain carries Phosphothreonine. Phosphoserine is present on residues S366, S371, S378, and S384. T389 bears the Phosphothreonine mark.

In terms of assembly, interacts with MARK1, MARK2, MARK3 and MARK4. Interacts with SQSTM1 when polyubiquitinated. Interacts with PSMC2 through SQSTM1. Interacts with FKBP4. Binds to CSNK1D. Interacts with SGK1. Interacts with PIN1. Interacts with LRRK2. Interacts with LRP1, leading to endocytosis; this interaction is reduced in the presence of LRPAP1/RAP. In terms of processing, polyubiquitinated. Requires functional TRAF6 and may provoke SQSTM1-dependent degradation by the proteasome. Phosphorylation at various serine and threonine residues in S-P or T-P motifs by proline-directed protein kinases (PDPK1, CDK1, CDK5, GSK3, MAPK) (a few sites per protein in interphase, more in mitosis), and at serine residues in K-X-G-S motifs by MAP/microtubule affinity-regulating kinase (MARK1, MARK2, MARK3, MARK4), causing detachment from microtubules, and their disassembly. Phosphorylation at Ser-224 by BRSK1 and BRSK2 in neurons affects ability to bind microtubules and plays a role in neuron polarization. Phosphorylated by PHK. Dephosphorylation at several serine and threonine residues by the serine/threonine phosphatase PPP5C. In terms of tissue distribution, expressed in neurons.

The protein resides in the cytoplasm. The protein localises to the cytosol. Its subcellular location is the cell membrane. It is found in the cytoskeleton. It localises to the cell projection. The protein resides in the axon. The protein localises to the dendrite. In terms of biological role, promotes microtubule assembly and stability, and might be involved in the establishment and maintenance of neuronal polarity. The C-terminus binds axonal microtubules while the N-terminus binds neural plasma membrane components, suggesting that tau functions as a linker protein between both. Axonal polarity is predetermined by tau localization (in the neuronal cell) in the domain of the cell body defined by the centrosome. The short isoforms allow plasticity of the cytoskeleton whereas the longer isoforms may preferentially play a role in its stabilization. This chain is Microtubule-associated protein tau (MAPT), found in Capra hircus (Goat).